The following is a 65-amino-acid chain: 7 kDa A-type inclusion protein (65 aa).

The segment covering 1–20 has biased composition (polar residues); that stretch reads MSNQNIPQLSEYQTSVSQVA. Residues 1-32 are disordered; sequence MSNQNIPQLSEYQTSVSQVAVTPPPKPKTPQI.

In Bos taurus (Bovine), this protein is 7 kDa A-type inclusion protein.